Here is a 31-residue protein sequence, read N- to C-terminus: LysM-domain containing protein (31 aa).

Residues 1 to 28 form a LysM 1 repeat; sequence YSPSLTDLQSYNAMNGPALKAGDILAVP.

This is LysM-domain containing protein from Jatropha curcas (Barbados nut).